Here is a 297-residue protein sequence, read N- to C-terminus: UDP-N-acetylenolpyruvoylglucosamine reductase (297 aa).

An FAD-binding PCMH-type domain is found at Thr-27 to Glu-191. Residue Arg-170 is part of the active site. The active-site Proton donor is Ser-220. Residue Glu-290 is part of the active site.

It belongs to the MurB family. It depends on FAD as a cofactor.

It is found in the cytoplasm. It catalyses the reaction UDP-N-acetyl-alpha-D-muramate + NADP(+) = UDP-N-acetyl-3-O-(1-carboxyvinyl)-alpha-D-glucosamine + NADPH + H(+). It participates in cell wall biogenesis; peptidoglycan biosynthesis. Its function is as follows. Cell wall formation. This chain is UDP-N-acetylenolpyruvoylglucosamine reductase, found in Listeria welshimeri serovar 6b (strain ATCC 35897 / DSM 20650 / CCUG 15529 / CIP 8149 / NCTC 11857 / SLCC 5334 / V8).